A 299-amino-acid chain; its full sequence is Taste receptor type 2 member 5 (299 aa).

Position 1 (Met-1) is a topological domain, extracellular. The helical transmembrane segment at 2 to 22 threads the bilayer; it reads LSAGLGLLMLVAVVEFLIGLI. The Cytoplasmic portion of the chain corresponds to 23 to 45; that stretch reads GNGVLVVWSFREWIRKFSWSSYN. The helical transmembrane segment at 46–66 threads the bilayer; that stretch reads LIILGLAGCRFVLQWLIILDL. The Extracellular segment spans residues 67–82; it reads SLFPLFQSSRWLRYLS. A helical transmembrane segment spans residues 83-103; it reads IFWVLVSQASLWFATFLSVFY. Topologically, residues 104–127 are cytoplasmic; sequence CKKITTFDHPAYLWLKQRAYNLSL. A helical transmembrane segment spans residues 128–148; sequence WCLLGYFIINLLLTVQIGLMF. Over 149–175 the chain is Extracellular; it reads YHPPQGNSSIRYPFESWQYLYAFRLNS. Asn-155 carries N-linked (GlcNAc...) asparagine glycosylation. A helical membrane pass occupies residues 176–196; sequence GSYLPLMVFLVSSGMLIVSLY. The Cytoplasmic portion of the chain corresponds to 197-223; that stretch reads THHKKMKVHSAGRRDVRAKAHITALKS. Residues 224–244 traverse the membrane as a helical segment; that stretch reads LGCFLLLHLVYIMASPFSIAS. The Extracellular segment spans residues 245 to 253; the sequence is KTYPPDLTS. A helical transmembrane segment spans residues 254–274; that stretch reads VFIWETLMAAYPSLHSLILIM. The Cytoplasmic portion of the chain corresponds to 275–299; sequence GIPRVKQTCQKIXWKTVCARRCWGP.

The protein belongs to the G-protein coupled receptor T2R family.

It is found in the membrane. Functionally, receptor that may play a role in the perception of bitterness and is gustducin-linked. May play a role in sensing the chemical composition of the gastrointestinal content. The activity of this receptor may stimulate alpha gustducin, mediate PLC-beta-2 activation and lead to the gating of TRPM5. The protein is Taste receptor type 2 member 5 (TAS2R5) of Pan troglodytes (Chimpanzee).